We begin with the raw amino-acid sequence, 278 residues long: Methyltransferase GfsG (278 aa).

Residues Q105 and 128 to 129 (DA) each bind S-adenosyl-L-methionine. Catalysis depends on E146, which acts as the Proton acceptor. H150 contributes to the S-adenosyl-L-methionine binding site.

The protein belongs to the methyltransferase superfamily.

It participates in antibiotic biosynthesis. Functionally, methylase required for synthesis of the 16-membered macrolide antibiotics FD-891 and FD-892. In vitro uses S-adenosyl-L-methionine to methylate a number of biosynthetic intermediates in the synthesis of FD-891. The sequence is that of Methyltransferase GfsG from Streptomyces halstedii.